Here is a 335-residue protein sequence, read N- to C-terminus: Anthranilate phosphoribosyltransferase 2 (335 aa).

5-phospho-alpha-D-ribose 1-diphosphate-binding positions include Gly70, 73 to 74, Thr78, 80 to 83, 98 to 106, and Ser110; these read GD, NIST, and KHGNRSASS. Residue Gly70 coordinates anthranilate. Ser82 serves as a coordination point for Mg(2+). Residue Asn101 participates in anthranilate binding. Residue Arg156 coordinates anthranilate. The Mg(2+) site is built by Asp215 and Glu216.

This sequence belongs to the anthranilate phosphoribosyltransferase family. Homodimer. Mg(2+) serves as cofactor.

The enzyme catalyses N-(5-phospho-beta-D-ribosyl)anthranilate + diphosphate = 5-phospho-alpha-D-ribose 1-diphosphate + anthranilate. The protein operates within amino-acid biosynthesis; L-tryptophan biosynthesis; L-tryptophan from chorismate: step 2/5. Catalyzes the transfer of the phosphoribosyl group of 5-phosphorylribose-1-pyrophosphate (PRPP) to anthranilate to yield N-(5'-phosphoribosyl)-anthranilate (PRA). This Streptomyces coelicolor (strain ATCC BAA-471 / A3(2) / M145) protein is Anthranilate phosphoribosyltransferase 2.